Here is a 692-residue protein sequence, read N- to C-terminus: Elongation factor G (692 aa).

The 275-residue stretch at 8-282 folds into the tr-type G domain; sequence DKTRNIGIMA…AVLDYLPAPT (275 aa). Residues 17 to 24, 81 to 85, and 135 to 138 contribute to the GTP site; these read AHIDAGKT, DTPGH, and NKMD.

This sequence belongs to the TRAFAC class translation factor GTPase superfamily. Classic translation factor GTPase family. EF-G/EF-2 subfamily.

It is found in the cytoplasm. Its function is as follows. Catalyzes the GTP-dependent ribosomal translocation step during translation elongation. During this step, the ribosome changes from the pre-translocational (PRE) to the post-translocational (POST) state as the newly formed A-site-bound peptidyl-tRNA and P-site-bound deacylated tRNA move to the P and E sites, respectively. Catalyzes the coordinated movement of the two tRNA molecules, the mRNA and conformational changes in the ribosome. This chain is Elongation factor G, found in Bacillus pumilus (strain SAFR-032).